A 418-amino-acid polypeptide reads, in one-letter code: Dihydrofolate synthase/folylpolyglutamate synthase (418 aa).

53–56 (GKGT) serves as a coordination point for ATP. Serine 77 lines the Mg(2+) pocket. 116–119 (TYFE) contacts 7,8-dihydropteroate. Mg(2+) is bound at residue glutamate 140. Position 147–149 (147–149 (LDA)) interacts with 7,8-dihydropteroate. A Mg(2+)-binding site is contributed by histidine 167. Residues asparagine 252, arginine 284, and aspartate 297 each coordinate ATP.

Belongs to the folylpolyglutamate synthase family. Monomer. Requires Mg(2+) as cofactor.

It carries out the reaction 7,8-dihydropteroate + L-glutamate + ATP = 7,8-dihydrofolate + ADP + phosphate + H(+). It catalyses the reaction (6S)-5,6,7,8-tetrahydrofolyl-(gamma-L-Glu)(n) + L-glutamate + ATP = (6S)-5,6,7,8-tetrahydrofolyl-(gamma-L-Glu)(n+1) + ADP + phosphate + H(+). The catalysed reaction is 10-formyltetrahydrofolyl-(gamma-L-Glu)(n) + L-glutamate + ATP = 10-formyltetrahydrofolyl-(gamma-L-Glu)(n+1) + ADP + phosphate + H(+). The enzyme catalyses (6R)-5,10-methylenetetrahydrofolyl-(gamma-L-Glu)(n) + L-glutamate + ATP = (6R)-5,10-methylenetetrahydrofolyl-(gamma-L-Glu)(n+1) + ADP + phosphate + H(+). It participates in cofactor biosynthesis; tetrahydrofolate biosynthesis; 7,8-dihydrofolate from 2-amino-4-hydroxy-6-hydroxymethyl-7,8-dihydropteridine diphosphate and 4-aminobenzoate: step 2/2. Its pathway is cofactor biosynthesis; tetrahydrofolylpolyglutamate biosynthesis. Its function is as follows. Functions in two distinct reactions of the de novo folate biosynthetic pathway. Catalyzes the addition of a glutamate residue to dihydropteroate (7,8-dihydropteroate or H2Pte) to form dihydrofolate (7,8-dihydrofolate monoglutamate or H2Pte-Glu). Also catalyzes successive additions of L-glutamate to tetrahydrofolate or 10-formyltetrahydrofolate or 5,10-methylenetetrahydrofolate, leading to folylpolyglutamate derivatives. This is Dihydrofolate synthase/folylpolyglutamate synthase (folC) from Buchnera aphidicola subsp. Schizaphis graminum (strain Sg).